Consider the following 142-residue polypeptide: Ribosomal RNA large subunit methyltransferase H (142 aa).

G89 is an S-adenosyl-L-methionine binding site.

This sequence belongs to the RNA methyltransferase RlmH family. Homodimer.

The protein localises to the cytoplasm. It carries out the reaction pseudouridine(1915) in 23S rRNA + S-adenosyl-L-methionine = N(3)-methylpseudouridine(1915) in 23S rRNA + S-adenosyl-L-homocysteine + H(+). Its function is as follows. Specifically methylates the pseudouridine at position 1915 (m3Psi1915) in 23S rRNA. The sequence is that of Ribosomal RNA large subunit methyltransferase H from Zymomonas mobilis subsp. mobilis (strain ATCC 31821 / ZM4 / CP4).